Consider the following 548-residue polypeptide: Chaperonin GroEL (548 aa).

Residues 30-33, Lys-51, 87-91, Gly-415, 479-481, and Asp-495 contribute to the ATP site; these read TLGP, DGTTT, and NAA.

This sequence belongs to the chaperonin (HSP60) family. As to quaternary structure, forms a cylinder of 14 subunits composed of two heptameric rings stacked back-to-back. Interacts with the co-chaperonin GroES.

It localises to the cytoplasm. The catalysed reaction is ATP + H2O + a folded polypeptide = ADP + phosphate + an unfolded polypeptide.. In terms of biological role, together with its co-chaperonin GroES, plays an essential role in assisting protein folding. The GroEL-GroES system forms a nano-cage that allows encapsulation of the non-native substrate proteins and provides a physical environment optimized to promote and accelerate protein folding. The chain is Chaperonin GroEL from Pectobacterium carotovorum subsp. carotovorum (strain PC1).